A 99-amino-acid polypeptide reads, in one-letter code: Integration host factor subunit alpha (99 aa).

The disordered stretch occupies residues 49–70 (FGNFDLRDKNQRPGRNPKTGED).

Belongs to the bacterial histone-like protein family. As to quaternary structure, heterodimer of an alpha and a beta chain.

This protein is one of the two subunits of integration host factor, a specific DNA-binding protein that functions in genetic recombination as well as in transcriptional and translational control. The sequence is that of Integration host factor subunit alpha from Cronobacter sakazakii (strain ATCC BAA-894) (Enterobacter sakazakii).